Reading from the N-terminus, the 140-residue chain is Small ribosomal subunit protein uS12 (140 aa).

D102 bears the 3-methylthioaspartic acid mark.

It belongs to the universal ribosomal protein uS12 family. As to quaternary structure, part of the 30S ribosomal subunit. Contacts proteins S8 and S17. May interact with IF1 in the 30S initiation complex.

With S4 and S5 plays an important role in translational accuracy. Its function is as follows. Interacts with and stabilizes bases of the 16S rRNA that are involved in tRNA selection in the A site and with the mRNA backbone. Located at the interface of the 30S and 50S subunits, it traverses the body of the 30S subunit contacting proteins on the other side and probably holding the rRNA structure together. The combined cluster of proteins S8, S12 and S17 appears to hold together the shoulder and platform of the 30S subunit. This is Small ribosomal subunit protein uS12 from Geobacillus sp. (strain WCH70).